Here is an 853-residue protein sequence, read N- to C-terminus: DNA mismatch repair protein MutS (853 aa).

ATP is bound at residue Gly614–Ser621.

This sequence belongs to the DNA mismatch repair MutS family.

This protein is involved in the repair of mismatches in DNA. It is possible that it carries out the mismatch recognition step. This protein has a weak ATPase activity. In Cronobacter sakazakii (strain ATCC BAA-894) (Enterobacter sakazakii), this protein is DNA mismatch repair protein MutS.